The following is a 444-amino-acid chain: ATP-dependent protease ATPase subunit HslU (444 aa).

ATP-binding positions include Ile20 and 62 to 67 (GVGKTE). Residues 130–158 (EDRILDALVPPPRGASGEPERGEDNSARQ) form a disordered region. 3 residues coordinate ATP: Asp257, Glu322, and Arg394.

The protein belongs to the ClpX chaperone family. HslU subfamily. In terms of assembly, a double ring-shaped homohexamer of HslV is capped on each side by a ring-shaped HslU homohexamer. The assembly of the HslU/HslV complex is dependent on binding of ATP.

The protein localises to the cytoplasm. Its function is as follows. ATPase subunit of a proteasome-like degradation complex; this subunit has chaperone activity. The binding of ATP and its subsequent hydrolysis by HslU are essential for unfolding of protein substrates subsequently hydrolyzed by HslV. HslU recognizes the N-terminal part of its protein substrates and unfolds these before they are guided to HslV for hydrolysis. In Bordetella bronchiseptica (strain ATCC BAA-588 / NCTC 13252 / RB50) (Alcaligenes bronchisepticus), this protein is ATP-dependent protease ATPase subunit HslU.